The following is a 60-amino-acid chain: Large ribosomal subunit protein bL32 (60 aa).

This sequence belongs to the bacterial ribosomal protein bL32 family.

The polypeptide is Large ribosomal subunit protein bL32 (Azotobacter vinelandii (strain DJ / ATCC BAA-1303)).